We begin with the raw amino-acid sequence, 349 residues long: Estrogen receptor (349 aa).

Positions 1 to 5 form a DNA-binding region, nuclear receptor; sequence YEVGM. Positions 1–38 are disordered; the sequence is YEVGMMKGGIRKDRRGGRMLKHKRQREENDSRNAGALT. Residues 12–24 show a composition bias toward basic residues; sequence KDRRGGRMLKHKR. Residues 65–301 form the NR LBD domain; it reads TADQMVSALL…DLLLEMLDAH (237 aa). Residues 306–327 form a disordered region; it reads PAAKGSPPSEDDPLNQLAVPSP.

Belongs to the nuclear hormone receptor family. NR3 subfamily. As to quaternary structure, binds DNA as a homodimer. Can form a heterodimer with ER-beta.

The protein localises to the nucleus. Its function is as follows. The steroid hormones and their receptors are involved in the regulation of eukaryotic gene expression and affect cellular proliferation and differentiation in target tissues. This is Estrogen receptor (ESR1) from Anolis carolinensis (Green anole).